A 500-amino-acid chain; its full sequence is Lysine--tRNA ligase (500 aa).

Positions 410 and 417 each coordinate Mg(2+).

This sequence belongs to the class-II aminoacyl-tRNA synthetase family. Homodimer. It depends on Mg(2+) as a cofactor.

It localises to the cytoplasm. The enzyme catalyses tRNA(Lys) + L-lysine + ATP = L-lysyl-tRNA(Lys) + AMP + diphosphate. In Mycoplasma mycoides subsp. mycoides SC (strain CCUG 32753 / NCTC 10114 / PG1), this protein is Lysine--tRNA ligase.